The sequence spans 360 residues: Histidinol-phosphate aminotransferase (360 aa).

N6-(pyridoxal phosphate)lysine is present on lysine 218.

Belongs to the class-II pyridoxal-phosphate-dependent aminotransferase family. Histidinol-phosphate aminotransferase subfamily. In terms of assembly, homodimer. Pyridoxal 5'-phosphate is required as a cofactor.

It catalyses the reaction L-histidinol phosphate + 2-oxoglutarate = 3-(imidazol-4-yl)-2-oxopropyl phosphate + L-glutamate. It functions in the pathway amino-acid biosynthesis; L-histidine biosynthesis; L-histidine from 5-phospho-alpha-D-ribose 1-diphosphate: step 7/9. The polypeptide is Histidinol-phosphate aminotransferase (Chlorobium phaeovibrioides (strain DSM 265 / 1930) (Prosthecochloris vibrioformis (strain DSM 265))).